Consider the following 117-residue polypeptide: Cell division protein FtsL (117 aa).

The Cytoplasmic segment spans residues 1 to 35; that stretch reads MSNLAYQPEKQQRHAISPEKKVIVKKRASITLGEK. Residues 36-56 traverse the membrane as a helical segment; it reads VLLVLFAAAVLSVSLLIVSKA. The Extracellular segment spans residues 57-117; it reads YAAYQTNIEV…KDKKVKNIQE (61 aa).

Belongs to the FtsL family. As to quaternary structure, monomer. Interacts with DivIB and DivIC. Interaction with DivIC stabilizes FtsL against RasP cleavage. In terms of processing, cleaved by RasP. Cleavage is important for turnover and function of FtsL.

It localises to the cell membrane. Its function is as follows. Essential cell division protein that may play a structural role. Probably involved in the regulation of the timing of cell division. Also required for sporulation. This Bacillus subtilis (strain 168) protein is Cell division protein FtsL.